Consider the following 382-residue polypeptide: Chaperone protein DnaJ (382 aa).

Positions 5–69 constitute a J domain; sequence DYYEILGVSK…EKRARYDRFG (65 aa). The segment at 137–219 adopts a CR-type zinc-finger fold; the sequence is GKETEIEIPR…CGGTGRVKRR (83 aa). Zn(2+) contacts are provided by C150, C153, C167, C170, C193, C196, C207, and C210. CXXCXGXG motif repeat units lie at residues 150–157, 167–174, 193–200, and 207–214; these read CDTCQGSG, CPHCHGSG, CPVCGGTG, and CPTCGGTG. The disordered stretch occupies residues 154-175; it reads QGSGAKPGTSPTSCPHCHGSGQ.

This sequence belongs to the DnaJ family. As to quaternary structure, homodimer. Zn(2+) serves as cofactor.

The protein resides in the cytoplasm. Functionally, participates actively in the response to hyperosmotic and heat shock by preventing the aggregation of stress-denatured proteins and by disaggregating proteins, also in an autonomous, DnaK-independent fashion. Unfolded proteins bind initially to DnaJ; upon interaction with the DnaJ-bound protein, DnaK hydrolyzes its bound ATP, resulting in the formation of a stable complex. GrpE releases ADP from DnaK; ATP binding to DnaK triggers the release of the substrate protein, thus completing the reaction cycle. Several rounds of ATP-dependent interactions between DnaJ, DnaK and GrpE are required for fully efficient folding. Also involved, together with DnaK and GrpE, in the DNA replication of plasmids through activation of initiation proteins. In Geobacillus kaustophilus (strain HTA426), this protein is Chaperone protein DnaJ.